The following is a 253-amino-acid chain: MDVSDVTSRYNDRLRVTDYADAATNGLQVGPGDRSVERIAFAVDAAAATISDAVEWGADLLVVHHGVAWGGLDAVTGREYDRIAALVDGECALYAAHLPLDGHPELGNAAHVADVLGLTQRSPFGDHSGEQIGLQGQLPDPTSAPALSKSLAAALPTGDQPVQVLDVGPAELTDVAVVTGSGADWLREAEANGVDALVTGEGKGKLYHEAREAGVSVFLAGHYATETGGVRALEAVADDWGVETRFISHPTGL.

His64, His65, Asp101, His222, and Glu226 together coordinate a divalent metal cation.

Belongs to the GTP cyclohydrolase I type 2/NIF3 family. Homohexamer.

This is GTP cyclohydrolase 1 type 2 homolog from Halobacterium salinarum (strain ATCC 700922 / JCM 11081 / NRC-1) (Halobacterium halobium).